We begin with the raw amino-acid sequence, 481 residues long: Beta-amyrin 28-monooxygenase (481 aa).

A helical membrane pass occupies residues 4-24; the sequence is FYVPLLSLFVLFISLSFHFLF. Cys-428 contributes to the heme binding site.

The protein belongs to the cytochrome P450 family. Heme serves as cofactor. As to expression, mostly expressed in roots, and, to a lower extent, in stems and leaves. Accumulates only in the rhizome of plants.

The protein resides in the membrane. The enzyme catalyses beta-amyrin + 3 reduced [NADPH--hemoprotein reductase] + 3 O2 = oleanolate + 3 oxidized [NADPH--hemoprotein reductase] + 4 H2O + 4 H(+). The protein operates within secondary metabolite biosynthesis; terpenoid biosynthesis. Functionally, component of the oleanane-type triterpene saponins (e.g. ginsenosides or panaxosides) biosynthetic pathway. Catalyzes the carboxylation of beta-amyrin at the C-28 position to form oleanolic acid during ginsenoside biosynthesis, a class of tetracyclic triterpenoid saponins. This chain is Beta-amyrin 28-monooxygenase, found in Panax ginseng (Korean ginseng).